A 753-amino-acid chain; its full sequence is 5-methyltetrahydropteroyltriglutamate--homocysteine methyltransferase (753 aa).

5-methyltetrahydropteroyltri-L-glutamate-binding positions include 17-20 (RELK) and Lys117. L-homocysteine-binding positions include 431-433 (IGS) and Glu484. Residues 431 to 433 (IGS) and Glu484 each bind L-methionine. 5-methyltetrahydropteroyltri-L-glutamate is bound by residues 515–516 (RC) and Trp561. Residue Asp599 coordinates L-homocysteine. Residue Asp599 coordinates L-methionine. Glu605 provides a ligand contact to 5-methyltetrahydropteroyltri-L-glutamate. The Zn(2+) site is built by His641, Cys643, and Glu665. The active-site Proton donor is the His694. Cys726 is a binding site for Zn(2+).

The protein belongs to the vitamin-B12 independent methionine synthase family. Zn(2+) is required as a cofactor.

It catalyses the reaction 5-methyltetrahydropteroyltri-L-glutamate + L-homocysteine = tetrahydropteroyltri-L-glutamate + L-methionine. Its pathway is amino-acid biosynthesis; L-methionine biosynthesis via de novo pathway; L-methionine from L-homocysteine (MetE route): step 1/1. Its function is as follows. Catalyzes the transfer of a methyl group from 5-methyltetrahydrofolate to homocysteine resulting in methionine formation. The polypeptide is 5-methyltetrahydropteroyltriglutamate--homocysteine methyltransferase (Shigella boydii serotype 4 (strain Sb227)).